Reading from the N-terminus, the 156-residue chain is MPRKGPAPSRQLVKDPVYGDVLVSQLVNKVLLDGKKSTAERIVYGALEQCREKTGTDPILTLKKALDNVKPALEVRSRRVGGATYQVPVEVRPGRSTTLALRWLVTFTRQRRENTMTERLANEILDASNGLGASVKRREDTHKMAEANRAFAHYRW.

Belongs to the universal ribosomal protein uS7 family. In terms of assembly, part of the 30S ribosomal subunit. Contacts proteins S9 and S11.

Its function is as follows. One of the primary rRNA binding proteins, it binds directly to 16S rRNA where it nucleates assembly of the head domain of the 30S subunit. Is located at the subunit interface close to the decoding center, probably blocks exit of the E-site tRNA. The polypeptide is Small ribosomal subunit protein uS7 (Corynebacterium jeikeium (strain K411)).